The chain runs to 547 residues: Mucin-13 (547 aa).

Residues 1-210 (MSQSSGGTST…TVTSSSSTGS (210 aa)) are compositionally biased toward low complexity. The tract at residues 1-218 (MSQSSGGTST…GSNDPCNSNP (218 aa)) is disordered. The EGF-like 1 domain maps to 210 to 249 (SNDPCNSNPCKSPASCVKLYDSYFCLCLEGYYYNNSSSCV). 3 disulfides stabilise this stretch: Cys214–Cys225, Cys219–Cys234, and Cys236–Cys248. Asn243, Asn244, and Asn263 each carry an N-linked (GlcNAc...) asparagine glycan. Residues 250-366 (KGTTFPGEIG…ERYFQQDRCD (117 aa)) enclose the SEA domain. 2 consecutive EGF-like domains span residues 361–401 (QQDR…PFCV) and 401–441 (VAPT…GKCE). 5 cysteine pairs are disulfide-bonded: Cys365/Cys378, Cys370/Cys384, Cys386/Cys400, Cys409/Cys427, and Cys429/Cys440. Residues 459 to 479 (ILTIVGTIAGAFILILLIVFI) traverse the membrane as a helical segment. The Cytoplasmic segment spans residues 480-547 (VSMRSKNKKK…NHRSMPRPDY (68 aa)). The interval 525 to 547 (KTGVPSQTSNPYANHRSMPRPDY) is disordered.

In terms of assembly, homodimer of beta subunits. In terms of processing, cleaved into two subunits, alpha and beta, probably between the first EGF domain and the SEA domain. Beta subunit contains the cytoplasmic tail and alpha subunit the extracellular tail. The homooligomerization into dimers is dependent on intrachain disulfide bonds. Post-translationally, highly glycosylated.

Its subcellular location is the cell membrane. It is found in the secreted. Functionally, epithelial and hemopoietic transmembrane mucin that may play a role in cell signaling. The chain is Mucin-13 (Muc13) from Rattus norvegicus (Rat).